Here is a 179-residue protein sequence, read N- to C-terminus: Large ribosomal subunit protein uL5 (179 aa).

This sequence belongs to the universal ribosomal protein uL5 family. Part of the 50S ribosomal subunit; part of the 5S rRNA/L5/L18/L25 subcomplex. Contacts the 5S rRNA and the P site tRNA. Forms a bridge to the 30S subunit in the 70S ribosome.

Its function is as follows. This is one of the proteins that bind and probably mediate the attachment of the 5S RNA into the large ribosomal subunit, where it forms part of the central protuberance. In the 70S ribosome it contacts protein S13 of the 30S subunit (bridge B1b), connecting the 2 subunits; this bridge is implicated in subunit movement. Contacts the P site tRNA; the 5S rRNA and some of its associated proteins might help stabilize positioning of ribosome-bound tRNAs. This is Large ribosomal subunit protein uL5 from Burkholderia mallei (strain ATCC 23344).